Consider the following 92-residue polypeptide: Small ribosomal subunit protein bS20 (92 aa).

Residues 1 to 23 (MANTPSAKKRAKQAEKRRSHNAS) form a disordered region. Positions 7-20 (AKKRAKQAEKRRSH) are enriched in basic residues.

It belongs to the bacterial ribosomal protein bS20 family.

Binds directly to 16S ribosomal RNA. This chain is Small ribosomal subunit protein bS20, found in Pseudomonas savastanoi pv. phaseolicola (strain 1448A / Race 6) (Pseudomonas syringae pv. phaseolicola (strain 1448A / Race 6)).